Here is a 569-residue protein sequence, read N- to C-terminus: Pyruvate decarboxylase (569 aa).

2 residues coordinate pyruvate: D38 and H124. Thiamine diphosphate contacts are provided by residues T398 and 421–423; that span reads GSI. A Mg(2+)-binding site is contributed by D451. Thiamine diphosphate is bound by residues 452-453 and 478-483; these read GS and NEGYTI. Positions 478 and 480 each coordinate Mg(2+). E484 is a pyruvate binding site.

Belongs to the TPP enzyme family. In terms of assembly, homotetramer. Mg(2+) is required as a cofactor. Requires thiamine diphosphate as cofactor.

It carries out the reaction a 2-oxocarboxylate + H(+) = an aldehyde + CO2. It catalyses the reaction pyruvate + H(+) = acetaldehyde + CO2. This chain is Pyruvate decarboxylase (pdcA), found in Aspergillus fumigatus (strain ATCC MYA-4609 / CBS 101355 / FGSC A1100 / Af293) (Neosartorya fumigata).